Reading from the N-terminus, the 539-residue chain is Phosphoenolpyruvate carboxykinase (ATP) (539 aa).

Residues arginine 64, tyrosine 206, and lysine 212 each coordinate substrate. ATP-binding positions include lysine 212, histidine 231, and 247–255 (GLSGTGKTT). Mn(2+) is bound by residues lysine 212 and histidine 231. Aspartate 268 provides a ligand contact to Mn(2+). ATP contacts are provided by residues glutamate 296, arginine 332, 448–449 (RI), and threonine 454. Arginine 332 serves as a coordination point for substrate.

It belongs to the phosphoenolpyruvate carboxykinase (ATP) family. Monomer. The cofactor is Mn(2+).

It localises to the cytoplasm. It carries out the reaction oxaloacetate + ATP = phosphoenolpyruvate + ADP + CO2. It participates in carbohydrate biosynthesis; gluconeogenesis. Its function is as follows. Involved in the gluconeogenesis. Catalyzes the conversion of oxaloacetate (OAA) to phosphoenolpyruvate (PEP) through direct phosphoryl transfer between the nucleoside triphosphate and OAA. The chain is Phosphoenolpyruvate carboxykinase (ATP) from Hamiltonella defensa subsp. Acyrthosiphon pisum (strain 5AT).